The following is a 78-amino-acid chain: Acyl carrier protein (78 aa).

The Carrier domain maps to 2–77 (SNIEQQVKKI…LAIDYINAHN (76 aa)). Ser37 carries the O-(pantetheine 4'-phosphoryl)serine modification.

It belongs to the acyl carrier protein (ACP) family. Post-translationally, 4'-phosphopantetheine is transferred from CoA to a specific serine of apo-ACP by AcpS. This modification is essential for activity because fatty acids are bound in thioester linkage to the sulfhydryl of the prosthetic group.

Its subcellular location is the cytoplasm. Its pathway is lipid metabolism; fatty acid biosynthesis. Functionally, carrier of the growing fatty acid chain in fatty acid biosynthesis. The protein is Acyl carrier protein of Neisseria meningitidis serogroup C / serotype 2a (strain ATCC 700532 / DSM 15464 / FAM18).